The chain runs to 265 residues: 5'-nucleotidase SurE (265 aa).

Asp9, Asp10, Ser40, and Asn96 together coordinate a divalent metal cation.

The protein belongs to the SurE nucleotidase family. It depends on a divalent metal cation as a cofactor.

The protein resides in the cytoplasm. The catalysed reaction is a ribonucleoside 5'-phosphate + H2O = a ribonucleoside + phosphate. Its function is as follows. Nucleotidase that shows phosphatase activity on nucleoside 5'-monophosphates. The protein is 5'-nucleotidase SurE of Methanothrix thermoacetophila (strain DSM 6194 / JCM 14653 / NBRC 101360 / PT) (Methanosaeta thermophila).